The sequence spans 159 residues: MADDARQKHRLQSVELDEESLAAVSRDQEQERQIAIFDLLEDNYFAPEGAEHGPYDLRMGLVENRLVLDVRGPGYERRHILSLSPFRGLIRDYFMICESYYQAIRNSTPAQIEALDMGRRGLHNEASELLQTRLKGKIETDLDTARRLFTLICALHWRG.

It belongs to the UPF0262 family.

The chain is UPF0262 protein PHZ_c2197 from Phenylobacterium zucineum (strain HLK1).